The chain runs to 978 residues: Mast/stem cell growth factor receptor Kit (978 aa).

Positions 1 to 25 (MRGARGAWDFLFVLLLLLLVQTGSS) are cleaved as a signal peptide. Topologically, residues 26–525 (QPSVSPGELS…QIHAHTLFTP (500 aa)) are extracellular. Ig-like C2-type domains lie at 27-112 (PSVS…VFVR), 121-205 (DLPL…LKVR), 212-309 (PVVS…LEVV), 318-411 (PMMN…VNVN), and 414-508 (PEIL…FNFA). A disulfide bond links Cys-58 and Cys-97. N-linked (GlcNAc...) asparagine glycans are attached at residues Asn-94, Asn-130, and Asn-145. Cystine bridges form between Cys-136–Cys-186, Cys-151–Cys-183, and Cys-233–Cys-291. 9 N-linked (GlcNAc...) asparagine glycosylation sites follow: Asn-284, Asn-294, Asn-301, Asn-321, Asn-353, Asn-368, Asn-401, Asn-464, and Asn-487. An intrachain disulfide couples Cys-429 to Cys-492. A helical membrane pass occupies residues 526 to 546 (LLIGFVIAAGLMCIFVMILTY). Residues 547–978 (KYLQKPMYEV…TQPLLVHEDV (432 aa)) are Cytoplasmic-facing. Residues Tyr-548 and Tyr-554 each carry the phosphotyrosine modification. Tyr-569 serves as a coordination point for Mg(2+). Tyr-569 and Tyr-571 each carry phosphotyrosine; by autocatalysis. An important for interaction with phosphotyrosine-binding proteins region spans residues 569-571 (YVY). The region spanning 590 to 939 (LSFGKTLGAG…ISESTNHIYS (350 aa)) is the Protein kinase domain. ATP-binding positions include 597-604 (GAGAFGKV), Lys-624, and 672-678 (EYCCYGD). Residues Tyr-704 and Tyr-722 each carry the phosphotyrosine; by autocatalysis modification. Tyr-731 carries the post-translational modification Phosphotyrosine. 2 positions are modified to phosphoserine; by PKC/PRKCA: Ser-743 and Ser-748. Asp-794 functions as the Proton acceptor in the catalytic mechanism. Arg-798 contacts ATP. Asn-799 and Asp-812 together coordinate Mg(2+). Position 823 is a phosphoserine (Ser-823). Tyr-825 carries the phosphotyrosine; by autocatalysis modification. Position 893 is a phosphoserine (Ser-893). The residue at position 902 (Tyr-902) is a Phosphotyrosine. Tyr-938 carries the post-translational modification Phosphotyrosine; by autocatalysis. Ser-961 bears the Phosphoserine mark.

This sequence belongs to the protein kinase superfamily. Tyr protein kinase family. CSF-1/PDGF receptor subfamily. In terms of assembly, monomer in the absence of bound KITLG/SCF. Homodimer in the presence of bound KITLG/SCF, forming a heterotetramer with two KITLG/SCF molecules. Interacts (via phosphorylated tyrosine residues) with the adapter proteins GRB2 and GRB7 (via SH2 domain), and SH2B2/APS. Interacts (via C-terminus) with MPDZ (via the tenth PDZ domain). Interacts (via phosphorylated tyrosine residues) with PIK3R1 and PIK3CD. Interacts (via phosphorylated tyrosine) with CRK (isoform Crk-II), FYN, SHC1 and MATK/CHK (via SH2 domain). Interacts with LYN and FES/FPS. Interacts (via phosphorylated tyrosine residues) with the protein phosphatases PTPN6/SHP-1 (via SH2 domain), PTPN11/SHP-2 (via SH2 domain) and PTPRU. Interacts with PLCG1. Interacts with DOK1 and TEC. Interacts with IL1RAP (independent of stimulation with KITLG/SCF). A mast cell-specific KITLG/SCF-induced interleukin-33 signaling complex contains IL1RL1, IL1RAP, KIT and MYD88. Post-translationally, ubiquitinated by SOCS6. KIT is rapidly ubiquitinated after autophosphorylation induced by KITLG/SCF binding, leading to internalization and degradation. In terms of processing, autophosphorylated on tyrosine residues. KITLG/SCF binding promotes autophosphorylation. Phosphorylated tyrosine residues are important for interaction with specific binding partners.

The protein localises to the cell membrane. The enzyme catalyses L-tyrosyl-[protein] + ATP = O-phospho-L-tyrosyl-[protein] + ADP + H(+). Present in an inactive conformation in the absence of bound ligand. KITLG/SCF binding leads to dimerization and activation by autophosphorylation on tyrosine residues. Activity is down-regulated by PRKCA-mediated phosphorylation on serine residues. Functionally, tyrosine-protein kinase that acts as a cell-surface receptor for the cytokine KITLG/SCF and plays an essential role in the regulation of cell survival and proliferation, hematopoiesis, stem cell maintenance, gametogenesis, mast cell development, migration and function, and in melanogenesis. In response to KITLG/SCF binding, KIT can activate several signaling pathways. Phosphorylates PIK3R1, PLCG1, SH2B2/APS and CBL. Activates the AKT1 signaling pathway by phosphorylation of PIK3R1, the regulatory subunit of phosphatidylinositol 3-kinase. Activated KIT also transmits signals via GRB2 and activation of RAS, RAF1 and the MAP kinases MAPK1/ERK2 and/or MAPK3/ERK1. Promotes activation of STAT family members STAT1, STAT3, STAT5A and STAT5B. Activation of PLCG1 leads to the production of the cellular signaling molecules diacylglycerol and inositol 1,4,5-trisphosphate. KIT signaling is modulated by protein phosphatases, and by rapid internalization and degradation of the receptor. Activated KIT promotes phosphorylation of the protein phosphatases PTPN6/SHP-1 and PTPRU, and of the transcription factors STAT1, STAT3, STAT5A and STAT5B. Promotes phosphorylation of PIK3R1, CBL, CRK (isoform Crk-II), LYN, MAPK1/ERK2 and/or MAPK3/ERK1, PLCG1, SRC and SHC1. The sequence is that of Mast/stem cell growth factor receptor Kit (KIT) from Capra hircus (Goat).